Here is a 625-residue protein sequence, read N- to C-terminus: Protein arginine N-methyltransferase skb1 (625 aa).

The region spanning 280-588 is the SAM-dependent MTase PRMT-type domain; that stretch reads LQVPLQPLSY…WRLTDGMRVW (309 aa). Residues tyrosine 296, 305–306, glutamate 359, and 386–387 contribute to the S-adenosyl-L-methionine site; these read KY and DM. Active-site proton donor/acceptor residues include glutamate 402 and glutamate 411.

Belongs to the class I-like SAM-binding methyltransferase superfamily. Protein arginine N-methyltransferase family. Interacts with the N-terminal regulatory domain of shk1. Shk1, cdc42 and skb1 are able to form a ternary complex in vivo. Interacts with orb6. Interacts with Cdr1 and the Cdr1 inhibitory target Wee1.

It localises to the nucleus. The protein localises to the cell tip. Its subcellular location is the cell septum. It is found in the cytoplasm. The protein resides in the cell cortex. S-adenosyl-L-methionine-dependent protein-arginine N-methyltransferase that can catalyze both the mono- and symmetric (type II) dimethylation of the guanidino nitrogens of arginine residues in target proteins. Delays mitotic entry by inhibiting the Cdr1-Wee1 signaling pathway. Cortical nodes sequester Skb1 from its regulatory targets Cdr1 and Wee1. Positively modulates the shk1 kinase function. May be a mediator of hyperosmotic stress response. Involved in the control of cell polarity by regulating the subcellular localization of Orb6 kinase. The protein is Protein arginine N-methyltransferase skb1 of Schizosaccharomyces pombe (strain 972 / ATCC 24843) (Fission yeast).